A 429-amino-acid chain; its full sequence is Probable proton-coupled zinc antiporter SLC30A4 (429 aa).

Residues 1 to 113 (MAGSGAWKRL…ILKQRKVKAR (113 aa)) are Cytoplasmic-facing. Residues 114 to 134 (LTIAAVLYLLFMIGELVGGYI) traverse the membrane as a helical segment. At 135–143 (ANSLAIMTD) the chain is on the lumenal side. Residues 144–164 (ALHMLTDLSAIILTLLALWLS) form a helical membrane-spanning segment. Residues H146 and D150 each coordinate Zn(2+). Residues 165-178 (SKSPTKRFTFGFHR) are Cytoplasmic-facing. A helical membrane pass occupies residues 179–199 (LEVLSAMISVLLVYILMGFLL). Residues 200–216 (YEAVQRTIHMNYEINGD) lie on the Lumenal side of the membrane. A helical transmembrane segment spans residues 217–237 (IMLITAAVGVAVNVIMGFLLN). Residues 238–274 (QSGHRHSHSHSLPSNSPTRGSGCERNHGQDSLAVRAA) are Cytoplasmic-facing. A zinc binding region spans residues 240–264 (GHRHSHSHSLPSNSPTRGSGCERNH). The helical transmembrane segment at 275-295 (FVHALGDLVQSVGVLIAAYII) threads the bilayer. 2 residues coordinate Zn(2+): H277 and D281. The Lumenal portion of the chain corresponds to 296-310 (RFKPEYKIADPICTY). A helical transmembrane segment spans residues 311–331 (VFSLLVAFTTFRIIWDTVVII). Residues 332–429 (LEGVPSHLNV…TCANCQSSSP (98 aa)) are Cytoplasmic-facing.

It belongs to the cation diffusion facilitator (CDF) transporter (TC 2.A.4) family. SLC30A subfamily. Homodimer; dityrosine-linked. Homodimerization could be specific of the human protein and enhances the zinc transport efficiency. Interacts with TMEM163. Homodimerization through dityrosine bonds is stimulated by oxidative stress.

The protein localises to the endosome membrane. The protein resides in the late endosome membrane. It is found in the lysosome membrane. The enzyme catalyses Zn(2+)(in) + 2 H(+)(out) = Zn(2+)(out) + 2 H(+)(in). Functionally, probable proton-coupled zinc ion antiporter mediating zinc import from cytoplasm potentially into the endocytic compartment. Controls zinc deposition in milk. This is Probable proton-coupled zinc antiporter SLC30A4 from Homo sapiens (Human).